The following is a 342-amino-acid chain: Alternative oxidase, mitochondrial (342 aa).

Residues 1 to 20 (MIKTYQYRSILNSRNVGIRF) constitute a mitochondrion transit peptide. Residues 135 to 155 (LTRCIFLESVAGVPGMVAAFI) traverse the membrane as a helical segment. The Fe cation site is built by glutamate 142, glutamate 181, and histidine 184. Residues 200 to 220 (FIIYMGQGVFANLFFLVYLIK) form a helical membrane-spanning segment. The Fe cation site is built by glutamate 232, glutamate 287, and histidine 290. Basic and acidic residues-rich tracts occupy residues 308–321 (PFALKVEDVPKEQQ) and 330–342 (PHPEGWNREQMRL). Positions 308–342 (PFALKVEDVPKEQQPDEYSLKTPHPEGWNREQMRL) are disordered.

Belongs to the alternative oxidase family. In terms of assembly, homodimer; disulfide-linked. Requires Fe cation as cofactor.

The protein localises to the mitochondrion inner membrane. In terms of biological role, catalyzes cyanide-resistant oxygen consumption. May increase respiration when the cytochrome respiratory pathway is restricted, or in response to low temperatures. The polypeptide is Alternative oxidase, mitochondrial (AOX1) (Wickerhamomyces anomalus (Yeast)).